Reading from the N-terminus, the 616-residue chain is Dihydroxy-acid dehydratase (616 aa).

Position 81 (Asp81) interacts with Mg(2+). A [2Fe-2S] cluster-binding site is contributed by Cys122. Residues Asp123 and Lys124 each coordinate Mg(2+). Lys124 is subject to N6-carboxylysine. Cys195 lines the [2Fe-2S] cluster pocket. Position 491 (Glu491) interacts with Mg(2+). Residue Ser517 is the Proton acceptor of the active site.

The protein belongs to the IlvD/Edd family. As to quaternary structure, homodimer. [2Fe-2S] cluster serves as cofactor. It depends on Mg(2+) as a cofactor.

The enzyme catalyses (2R)-2,3-dihydroxy-3-methylbutanoate = 3-methyl-2-oxobutanoate + H2O. It carries out the reaction (2R,3R)-2,3-dihydroxy-3-methylpentanoate = (S)-3-methyl-2-oxopentanoate + H2O. The protein operates within amino-acid biosynthesis; L-isoleucine biosynthesis; L-isoleucine from 2-oxobutanoate: step 3/4. It functions in the pathway amino-acid biosynthesis; L-valine biosynthesis; L-valine from pyruvate: step 3/4. Its function is as follows. Functions in the biosynthesis of branched-chain amino acids. Catalyzes the dehydration of (2R,3R)-2,3-dihydroxy-3-methylpentanoate (2,3-dihydroxy-3-methylvalerate) into 2-oxo-3-methylpentanoate (2-oxo-3-methylvalerate) and of (2R)-2,3-dihydroxy-3-methylbutanoate (2,3-dihydroxyisovalerate) into 2-oxo-3-methylbutanoate (2-oxoisovalerate), the penultimate precursor to L-isoleucine and L-valine, respectively. In Escherichia coli (strain K12 / MC4100 / BW2952), this protein is Dihydroxy-acid dehydratase.